The sequence spans 638 residues: Chaperone protein DnaK (638 aa).

Thr-198 is subject to Phosphothreonine; by autocatalysis. Over residues 603–618 the composition is skewed to low complexity; that stretch reads QQAQAQQAQGADADAQ. The interval 603–638 is disordered; it reads QQAQAQQAQGADADAQQSKEDDVVDAEFEEVKDDKK. Positions 624–638 are enriched in acidic residues; sequence DVVDAEFEEVKDDKK.

The protein belongs to the heat shock protein 70 family.

Functionally, acts as a chaperone. This is Chaperone protein DnaK from Vibrio campbellii (strain ATCC BAA-1116).